A 415-amino-acid polypeptide reads, in one-letter code: Serine hydroxymethyltransferase 1 (415 aa).

(6S)-5,6,7,8-tetrahydrofolate contacts are provided by residues L122 and G126–L128. K230 carries the N6-(pyridoxal phosphate)lysine modification.

Belongs to the SHMT family. As to quaternary structure, homodimer. Requires pyridoxal 5'-phosphate as cofactor.

The protein resides in the cytoplasm. It carries out the reaction (6R)-5,10-methylene-5,6,7,8-tetrahydrofolate + glycine + H2O = (6S)-5,6,7,8-tetrahydrofolate + L-serine. It functions in the pathway one-carbon metabolism; tetrahydrofolate interconversion. It participates in amino-acid biosynthesis; glycine biosynthesis; glycine from L-serine: step 1/1. Catalyzes the reversible interconversion of serine and glycine with tetrahydrofolate (THF) serving as the one-carbon carrier. This reaction serves as the major source of one-carbon groups required for the biosynthesis of purines, thymidylate, methionine, and other important biomolecules. Also exhibits THF-independent aldolase activity toward beta-hydroxyamino acids, producing glycine and aldehydes, via a retro-aldol mechanism. This chain is Serine hydroxymethyltransferase 1, found in Ralstonia nicotianae (strain ATCC BAA-1114 / GMI1000) (Ralstonia solanacearum).